Here is a 261-residue protein sequence, read N- to C-terminus: Triosephosphate isomerase (261 aa).

10-12 contributes to the substrate binding site; it reads NWK. Catalysis depends on His100, which acts as the Electrophile. The active-site Proton acceptor is Glu172. Substrate contacts are provided by residues Gly178, Ser218, and 239–240; that span reads GG.

This sequence belongs to the triosephosphate isomerase family. As to quaternary structure, homodimer.

The protein localises to the cytoplasm. The enzyme catalyses D-glyceraldehyde 3-phosphate = dihydroxyacetone phosphate. Its pathway is carbohydrate biosynthesis; gluconeogenesis. The protein operates within carbohydrate degradation; glycolysis; D-glyceraldehyde 3-phosphate from glycerone phosphate: step 1/1. Its function is as follows. Involved in the gluconeogenesis. Catalyzes stereospecifically the conversion of dihydroxyacetone phosphate (DHAP) to D-glyceraldehyde-3-phosphate (G3P). The sequence is that of Triosephosphate isomerase from Mycolicibacterium paratuberculosis (strain ATCC BAA-968 / K-10) (Mycobacterium paratuberculosis).